The sequence spans 343 residues: tRNA-splicing endonuclease (343 aa).

Residues Y277, H288, and K319 contribute to the active site.

The protein belongs to the tRNA-intron endonuclease family. Archaeal long subfamily. Homodimer.

The catalysed reaction is pretRNA = a 3'-half-tRNA molecule with a 5'-OH end + a 5'-half-tRNA molecule with a 2',3'-cyclic phosphate end + an intron with a 2',3'-cyclic phosphate and a 5'-hydroxyl terminus.. Functionally, endonuclease that removes tRNA introns. Cleaves pre-tRNA at the 5' and 3' splice sites to release the intron. The products are an intron and two tRNA half-molecules bearing 2',3' cyclic phosphate and 5'-OH termini. Recognizes a pseudosymmetric substrate in which 2 bulged loops of 3 bases are separated by a stem of 4 bp. The sequence is that of tRNA-splicing endonuclease from Halobacterium salinarum (strain ATCC 29341 / DSM 671 / R1).